We begin with the raw amino-acid sequence, 362 residues long: N5-carboxyaminoimidazole ribonucleotide synthase (362 aa).

ATP is bound by residues Arg-85, Lys-125, 130-136, 158-161, Glu-166, and 244-245; these read GYDGRGQ, EKFI, and NE. One can recognise an ATP-grasp domain in the interval 89 to 274; that stretch reads KSLLDELNLS…QFELHLRALL (186 aa).

This sequence belongs to the PurK/PurT family. In terms of assembly, homodimer.

The catalysed reaction is 5-amino-1-(5-phospho-beta-D-ribosyl)imidazole + hydrogencarbonate + ATP = 5-carboxyamino-1-(5-phospho-D-ribosyl)imidazole + ADP + phosphate + 2 H(+). It functions in the pathway purine metabolism; IMP biosynthesis via de novo pathway; 5-amino-1-(5-phospho-D-ribosyl)imidazole-4-carboxylate from 5-amino-1-(5-phospho-D-ribosyl)imidazole (N5-CAIR route): step 1/2. Functionally, catalyzes the ATP-dependent conversion of 5-aminoimidazole ribonucleotide (AIR) and HCO(3)(-) to N5-carboxyaminoimidazole ribonucleotide (N5-CAIR). The polypeptide is N5-carboxyaminoimidazole ribonucleotide synthase (Haemophilus influenzae (strain ATCC 51907 / DSM 11121 / KW20 / Rd)).